We begin with the raw amino-acid sequence, 548 residues long: DNA-binding protein REPIN1 (548 aa).

Positions 1–47 (MLERRCRGPTAMGPAHPWLFSGPSQESSQPNRGLRYQGKSVAQPGGP) are disordered. The span at 22–31 (GPSQESSQPN) shows a compositional bias: polar residues. Position 27 is a phosphoserine (Ser27). Lys39 carries the N6-acetyllysine modification. Residues 53–75 (HRCAHCRKRFPGWVALWLHTRRC) form a C2H2-type 1; atypical zinc finger. 2 C2H2-type zinc fingers span residues 81-103 (LPCHECNQRFRHAPFLALHLQVH) and 112-134 (FICHLCGHSFRGWVALVLHLRAH). The C2H2-type 4; atypical zinc-finger motif lies at 141–163 (ITCPECNKRFWRQKQLRAHLRRC). 11 consecutive C2H2-type zinc fingers follow at residues 173–195 (FICGNCGRSFAQWDQLVVHKRVH), 232–254 (FQCACCGKRFRHKPNLIAHRRVH), 260–282 (HQCPECGKRFTNKPYLTSHRRIH), 288–310 (YPCTECGRRFRHKPNLLSHSKIH), 356–378 (HSCTDCGRSFRLERFLRLHQRQH), 384–406 (FTCTECGKNFGKKTHLVAHSRVH), 412–434 (FACEECGRRFSQGSHLAAHRRDH), 440–462 (FVCPDCGKAFRHKPYLAAHRRIH), 468–490 (YVCPDCGKAFSQKSNLVSHRRIH), 496–518 (YACPDCDRSFSQKSNLITHRKSH), and 524–546 (FCCAICGQTFDDEDRLLMHQKKH). Position 272 is an N6-acetyllysine (Lys272).

Homodimers and homomultimers. Found in a complex with RIP60 and RIP100. In terms of tissue distribution, expressed in the liver and in subcutaneous and visceral adipose tissue.

It localises to the nucleus. The protein resides in the cytoplasm. Its subcellular location is the cytosol. In terms of biological role, sequence-specific double-stranded DNA-binding protein. Binds ATT-rich and T-rich DNA sequences and facilitates DNA bending. May regulate the expression of genes involved in cellular fatty acid import, including SCARB1/CD36, and genes involved in lipid droplet formation. May regulate the expression of LCN2, and thereby influence iron metabolism and apoptosis-related pathways. May regulate the expression of genes involved in glucose transport. In Rattus norvegicus (Rat), this protein is DNA-binding protein REPIN1 (Repin1).